A 2014-amino-acid polypeptide reads, in one-letter code: Fatty acid synthase beta subunit pigK (2014 aa).

Residues 144 to 515 are acetyltransferase (AT) domain; it reads LAAVFGGQST…KDGQGVRVII (372 aa). Serine 263 acts as the For acetyltransferase activity in catalysis. The interval 570-815 is enoyl reductase (ER) domain; it reads SRLLDTPPLM…LITEASGVSD (246 aa). Positions 1126–1606 are dehydratase (DH) domain; the sequence is RSGSPWIHAL…LPGDRLLVNV (481 aa). A MaoC-like domain is found at 1514–1627; sequence PGWPGVSSLE…FNVSAFKQAT (114 aa). Residues 1645–2005 are malonyl/palmitoyl transferase (MT/PT) domain; that stretch reads FFFTGQGSQK…VREVFNITQS (361 aa). The For malonyltransferase activity role is filled by serine 1790.

The protein belongs to the fungal fatty acid synthetase subunit beta family. As to quaternary structure, [Alpha(6)beta(6)] hexamers of two multifunctional subunits (alpha and beta).

The catalysed reaction is acetyl-CoA + n malonyl-CoA + 2n NADPH + 4n H(+) = a long-chain-acyl-CoA + n CoA + n CO2 + 2n NADP(+).. It carries out the reaction holo-[ACP] + acetyl-CoA = acetyl-[ACP] + CoA. The enzyme catalyses holo-[ACP] + malonyl-CoA = malonyl-[ACP] + CoA. It catalyses the reaction a (3R)-hydroxyacyl-[ACP] = a (2E)-enoyl-[ACP] + H2O. The catalysed reaction is a 2,3-saturated acyl-[ACP] + NAD(+) = a (2E)-enoyl-[ACP] + NADH + H(+). It carries out the reaction (9Z)-octadecenoyl-[ACP] + H2O = (9Z)-octadecenoate + holo-[ACP] + H(+). Its pathway is secondary metabolite biosynthesis. Functionally, fatty acid synthase subunit beta; part of the gene cluster that mediates the biosynthesis of azaphilone pigments (MonAzPs), a complex mixture of compounds with a common azaphilone skeleton very widely used as food colorants. PigJ and pigK form the two subunits of a dedicated fungal fatty acid synthase (FAS) that produces the side chain fatty acyl moiety of MonAzPs, a beta-keto fatty acid. The chain length control of the pigJ-pigK FAS is somewhat flexible as MonAzPs features either a beta-ketooctanoic or a beta-ketodecanoic acid moiety. The beta-ketoacyl-ACP probably serves as the substrate for the acetyltransferase pigD that directly transfers the fatty acyl chain to the C-4 alcohol of the pyran ring. The first step of the pathway is performed by the nrPKS pigA that forms the hexaketide precursor from successive condensations of five malonyl-CoA units, with a simple acetyl-CoA starter unit. The role of esterase pigG is not clear, but it may play at most a supplementary role in the formation of the benzaldehyde produced by the pigA nrPKS. This very reactive benzaldehyde is intercepted by the pigC ketoreductase that to provide the first stable enzyme-free MonAzPs intermediate, 6-(4-hydroxy-2-oxopentyl)-3-methyl-2,4-dioxocyclohexane carbaldehyde, also known as M7PKS-1. The FAD-dependent monooxygenase pigN hydroxylates M7PKS-1 at C-4, which triggers the formation of the pyran ring. PigJ, pigK and pigD are involved in the acetylation of the pyran ring. PigJ and pigK form the two subunits of a dedicated fungal FAS that produces the side chain fatty acyl moiety of MonAzPs and pigD transfers the fatty acyl chain to the C-4 alcohol. PigM and pigO are involved in the elimination of the omega-1 alcohol. PigM acts as an O-acetyltransferase that synthesizes the putative O-11 acetyl intermediate whereas pigO eliminates acetic acid to yield an intermediate with a C10(11) double bond. The dehydration of the C-11 alcohol followed by the reduction of the C6(7) double bond by the NAD(P)H-dependent oxidoreductase pigE increases the electrophilicity of the C-5 ketone of the resulting acyl benzopyran. This in turn sets up the C-5 ketone for an intramolecular Knoevenagel aldol condensation with the C-20 enol of the side chain. This condensation affords the characteristic linear tricyclic carbon skeletons of the yellow pigments that serve as the common precursors for the classical yellow pigments monascin and ankaflavin, orange pigments rubopunctatin and monascorubrin, and red pigments ribropunctamine and monascorubramine. The FAD-dependent oxidoreductase pigF is especially invoved in the biosynthesis of orange and red pigments via desaturation of C6(7). The chain is Fatty acid synthase beta subunit pigK from Monascus ruber (Mold).